Consider the following 490-residue polypeptide: MADNQTTAAEPTNGRVTRVQGSVIDVEFPVGHLPDIYNALKVTIVNTSAKEEGEAKETEITLEVEQHLGDSTVRCVALKPTDGLVRGASVSDTGAPISVPVGDVTKGHVFDVSGNILNKKPDETITVSERWPIHRNPPAFDQLESKTQMFETGIKVIDLLTPYVQGGKIGLFGGAGVGKTVLIQEMIQRVAQNHGGVSVFAGVGERTREGNDLIGEMAEAGVLEKTALVFGQMDEQPGTRLRVPLTALTMAEYFRDVQNQDVLLFIDNIFRFTQAGSEVSTLLGRMPSAVGYQPNLADEMGSLQERITSTRGHSITSLQAIYVPADDYTDPAPATTFAHLDATTELSRDIASKGIYPAVDPLSSTSRILDPRYVGQAHYDCANRVKAILQRNKELQDIIALIGIDELGEEDKTTVNRARKIEQFLGQNFYVAEKFTGRPGSYVPADETIEAFTRICDGVYDDVPEQAFSGIGGIDDLEEKWHNMQKELGA.

ATP is bound at residue 173 to 180; the sequence is GGAGVGKT.

It belongs to the ATPase alpha/beta chains family. In terms of assembly, F-type ATPases have 2 components, CF(1) - the catalytic core - and CF(0) - the membrane proton channel. CF(1) has five subunits: alpha(3), beta(3), gamma(1), delta(1), epsilon(1). CF(0) has three main subunits: a(1), b(2) and c(9-12). The alpha and beta chains form an alternating ring which encloses part of the gamma chain. CF(1) is attached to CF(0) by a central stalk formed by the gamma and epsilon chains, while a peripheral stalk is formed by the delta and b chains.

Its subcellular location is the cell membrane. The catalysed reaction is ATP + H2O + 4 H(+)(in) = ADP + phosphate + 5 H(+)(out). Its function is as follows. Produces ATP from ADP in the presence of a proton gradient across the membrane. The catalytic sites are hosted primarily by the beta subunits. The chain is ATP synthase subunit beta from Bifidobacterium longum (strain DJO10A).